We begin with the raw amino-acid sequence, 368 residues long: Phosphoribosylaminoimidazole-succinocarboxamide synthase (368 aa).

Belongs to the SAICAR synthetase family.

It catalyses the reaction 5-amino-1-(5-phospho-D-ribosyl)imidazole-4-carboxylate + L-aspartate + ATP = (2S)-2-[5-amino-1-(5-phospho-beta-D-ribosyl)imidazole-4-carboxamido]succinate + ADP + phosphate + 2 H(+). Its pathway is purine metabolism; IMP biosynthesis via de novo pathway; 5-amino-1-(5-phospho-D-ribosyl)imidazole-4-carboxamide from 5-amino-1-(5-phospho-D-ribosyl)imidazole-4-carboxylate: step 1/2. The protein is Phosphoribosylaminoimidazole-succinocarboxamide synthase of Vibrio cholerae serotype O1 (strain ATCC 39315 / El Tor Inaba N16961).